The following is a 242-amino-acid chain: DNA repair protein RecO (242 aa).

It belongs to the RecO family.

Its function is as follows. Involved in DNA repair and RecF pathway recombination. This chain is DNA repair protein RecO, found in Wolbachia pipientis subsp. Culex pipiens (strain wPip).